The chain runs to 591 residues: Aspartate--tRNA(Asp/Asn) ligase (591 aa).

Glu175 lines the L-aspartate pocket. The segment at 199-202 (QQYK) is aspartate. L-aspartate contacts are provided by Arg221 and His450. An ATP-binding site is contributed by 221–223 (RDE). Glu484 serves as a coordination point for ATP. Arg491 contributes to the L-aspartate binding site. 536–539 (GVDR) is an ATP binding site.

The protein belongs to the class-II aminoacyl-tRNA synthetase family. Type 1 subfamily. Homodimer.

The protein localises to the cytoplasm. The enzyme catalyses tRNA(Asx) + L-aspartate + ATP = L-aspartyl-tRNA(Asx) + AMP + diphosphate. In terms of biological role, aspartyl-tRNA synthetase with relaxed tRNA specificity since it is able to aspartylate not only its cognate tRNA(Asp) but also tRNA(Asn). Reaction proceeds in two steps: L-aspartate is first activated by ATP to form Asp-AMP and then transferred to the acceptor end of tRNA(Asp/Asn). This chain is Aspartate--tRNA(Asp/Asn) ligase, found in Rhodopseudomonas palustris (strain ATCC BAA-98 / CGA009).